We begin with the raw amino-acid sequence, 510 residues long: Insulinoma-associated protein 1 (510 aa).

The segment covering 1–12 has biased composition (basic residues); the sequence is MPRGFLVKRSKK. Residues 1–20 are SNAG domain; the sequence is MPRGFLVKRSKKSTPVSYRV. Disordered stretches follow at residues 1-110 and 176-226; these read MPRG…SREH and GAEA…PKAI. A required and sufficient for interaction with KDM1A region spans residues 2–7; it reads PRGFLV. The necessary for interaction with CCND1 stretch occupies residues 43 to 58; it reads PPAPSPVPGPLPPPPP. Residues 43-59 show a composition bias toward pro residues; sequence PPAPSPVPGPLPPPPPA. Composition is skewed to low complexity over residues 64–74 and 209–218; these read AALAAALACAP and EPPAKAVKAP. A C2H2-type 1; atypical zinc finger spans residues 267-287; sequence FICQLCKEEYADPFALAQHKC. The segment at 295–317 adopts a C2H2-type 2 zinc-finger fold; that stretch reads YRCPECAKVFSCPANLASHRRWH. Residues 315-362 form a disordered region; it reads RWHKPRPAPAAARAPEPEAAARAEAREAPGGGSDRDTPSPGGVSESGS. Over residues 329–351 the composition is skewed to basic and acidic residues; the sequence is PEPEAAARAEAREAPGGGSDRDT. C2H2-type zinc fingers lie at residues 367–389, 441–464, and 469–492; these read YECHHCAKKFRRQAYLRKHLLAH, HLCPVCGESFASKGAQERHLRLLH, and FPCKYCPATFYSSPGLTRHINKCH.

It belongs to the INSM1 family. Interacts (via the SNAG domain) with HDAC1. Interacts (via the SNAG domain) with HDAC2. Interacts (via the SNAG domain) with KDM1A. Interacts (via the SNAG domain) with RCOR1. Interacts with SORBS1. Interacts (via the N-terminal region) with CCND1 (via cyclin N-terminal domain); the interaction competes with the binding of CCND1 to CDK4 during cell cycle progression and increases its transcriptional repressor activity. Interacts with HDAC3; the interaction increases its transcriptional repressor activity. As to expression, expressed in pancreatic duct cells. Expressed in several tumor cell lines of neuroendocrine origin including pheochromocytoma, medullary thyroid carcinoma, insulinoma, medulloblastoma, retinoblastoma, pheochromacytoma, medullary thyroid carcinoma and small cell lung carcinoma.

It is found in the nucleus. Sequence-specific DNA-binding transcriptional regulator that plays a key role in neurogenesis and neuroendocrine cell differentiation during embryonic and/or fetal development. Binds to the consensus sequence 5'-[TG][TC][TC][TT][GA]GGG[CG]A-3' in target promoters. Acts as a transcriptional repressor of NEUROD1 and INS expression via its interaction with cyclin CCND1 in a cell cycle-independent manner. Negatively regulates skeletal muscle-specific gene expression in endocrine cells of the pituitary by inhibiting the Notch signaling pathway. Represses target gene transcription by recruiting chromatin-modifying factors, such as HDAC1, HDAC2, HDAC3, KDM1A and RCOR1 histone deacetylases. Binds to its own promoter, suggesting autoregulation as a self-control feedback mechanism. Competes with histone H3 for the same binding site on the histone demethylase complex formed by KDM1A and RCOR1, and thereby inhibits demethylation of histone H3 at 'Lys-4'. Promotes the generation and expansion of neuronal basal progenitor cells in the developing neocortex. Involved in the differentiation of endocrine cells of the developing anterior pituitary gland, of the pancreas and intestine, and of sympatho-adrenal cells in the peripheral nervous system. Promotes cell cycle signaling arrest and inhibition of cellular proliferation. The protein is Insulinoma-associated protein 1 (INSM1) of Homo sapiens (Human).